The primary structure comprises 170 residues: CFA/I fimbrial subunit B (170 aa).

The first 23 residues, 1 to 23 (MKFKKTIGAMALTTMFVAVSASA), serve as a signal peptide directing secretion.

The protein belongs to the fimbrial CS1 protein family. As to quaternary structure, CFA/I fimbriae are rather rigid, thread-like filaments of 0.5-1 micrometer, with an apparent axial hole, and a diameter of 7 nanometers. A single CFA/I fimbria consists of about 100 identical protein subunits.

Its subcellular location is the fimbrium. Its function is as follows. Fimbriae (also called pili), polar filaments radiating from the surface of the bacterium to a length of 0.5-1.5 micrometers and numbering 100-300 per cell, enable bacteria to colonize the epithelium of specific host organs. In Escherichia coli O78:H11 (strain H10407 / ETEC), this protein is CFA/I fimbrial subunit B (cfaB).